The following is a 77-amino-acid chain: Acyl carrier protein (77 aa).

The 76-residue stretch at 2–77 (ADVLERVTKI…DAVTYIESHL (76 aa)) folds into the Carrier domain. The residue at position 37 (serine 37) is an O-(pantetheine 4'-phosphoryl)serine.

The protein belongs to the acyl carrier protein (ACP) family. 4'-phosphopantetheine is transferred from CoA to a specific serine of apo-ACP by AcpS. This modification is essential for activity because fatty acids are bound in thioester linkage to the sulfhydryl of the prosthetic group.

It localises to the cytoplasm. It functions in the pathway lipid metabolism; fatty acid biosynthesis. Functionally, carrier of the growing fatty acid chain in fatty acid biosynthesis. This Bacillus anthracis (strain A0248) protein is Acyl carrier protein.